We begin with the raw amino-acid sequence, 501 residues long: Lysine--tRNA ligase (501 aa).

Residues glutamate 402 and glutamate 409 each contribute to the Mg(2+) site.

It belongs to the class-II aminoacyl-tRNA synthetase family. As to quaternary structure, homodimer. Requires Mg(2+) as cofactor.

It is found in the cytoplasm. The catalysed reaction is tRNA(Lys) + L-lysine + ATP = L-lysyl-tRNA(Lys) + AMP + diphosphate. This Helicobacter pylori (strain HPAG1) protein is Lysine--tRNA ligase.